A 252-amino-acid polypeptide reads, in one-letter code: Hydroxyacylglutathione hydrolase (252 aa).

The Zn(2+) site is built by histidine 54, histidine 56, aspartate 58, histidine 59, histidine 111, aspartate 130, and histidine 170.

This sequence belongs to the metallo-beta-lactamase superfamily. Glyoxalase II family. Monomer. It depends on Zn(2+) as a cofactor.

It carries out the reaction an S-(2-hydroxyacyl)glutathione + H2O = a 2-hydroxy carboxylate + glutathione + H(+). The protein operates within secondary metabolite metabolism; methylglyoxal degradation; (R)-lactate from methylglyoxal: step 2/2. Its function is as follows. Thiolesterase that catalyzes the hydrolysis of S-D-lactoyl-glutathione to form glutathione and D-lactic acid. In Francisella tularensis subsp. tularensis (strain FSC 198), this protein is Hydroxyacylglutathione hydrolase.